A 312-amino-acid chain; its full sequence is HPr kinase/phosphorylase (312 aa).

Active-site residues include H139 and K160. 154–161 (GDSGIGKS) is an ATP binding site. Residue S161 participates in Mg(2+) binding. The active-site Proton acceptor; for phosphorylation activity. Proton donor; for dephosphorylation activity is D178. The important for the catalytic mechanism of both phosphorylation and dephosphorylation stretch occupies residues 202–211 (IEIRGVGIID). Residue E203 coordinates Mg(2+). Residue R244 is part of the active site. Residues 265–270 (PVKTGR) are important for the catalytic mechanism of dephosphorylation.

The protein belongs to the HPrK/P family. As to quaternary structure, homohexamer. The cofactor is Mg(2+).

It carries out the reaction [HPr protein]-L-serine + ATP = [HPr protein]-O-phospho-L-serine + ADP + H(+). The enzyme catalyses [HPr protein]-O-phospho-L-serine + phosphate + H(+) = [HPr protein]-L-serine + diphosphate. Functionally, catalyzes the ATP- as well as the pyrophosphate-dependent phosphorylation of a specific serine residue in HPr, a phosphocarrier protein of the phosphoenolpyruvate-dependent sugar phosphotransferase system (PTS). HprK/P also catalyzes the pyrophosphate-producing, inorganic phosphate-dependent dephosphorylation (phosphorolysis) of seryl-phosphorylated HPr (P-Ser-HPr). The two antagonistic activities of HprK/P are regulated by several intracellular metabolites, which change their concentration in response to the absence or presence of rapidly metabolisable carbon sources (glucose, fructose, etc.) in the growth medium. Therefore, by controlling the phosphorylation state of HPr, HPrK/P is a sensor enzyme that plays a major role in the regulation of carbon metabolism and sugar transport: it mediates carbon catabolite repression (CCR), and regulates PTS-catalyzed carbohydrate uptake and inducer exclusion. This is HPr kinase/phosphorylase from Streptococcus pneumoniae (strain ATCC BAA-255 / R6).